The following is a 488-amino-acid chain: GTPase Der (488 aa).

EngA-type G domains follow at residues 3–166 (PVVA…AEAM) and 199–372 (IKLA…DSAT). GTP-binding positions include 9 to 16 (GRPNVGKS), 56 to 60 (DTGGI), 118 to 121 (NKVD), 205 to 212 (GKPNVGKS), 252 to 256 (DTAGV), and 317 to 320 (NKWD). The 85-residue stretch at 373–457 (RRVSTSMLTR…PIQLRFQEGD (85 aa)) folds into the KH-like domain. A disordered region spans residues 469-488 (MSQERRRKRALSHIKDRKTK). The segment covering 473-488 (RRRKRALSHIKDRKTK) has biased composition (basic residues).

This sequence belongs to the TRAFAC class TrmE-Era-EngA-EngB-Septin-like GTPase superfamily. EngA (Der) GTPase family. In terms of assembly, associates with the 50S ribosomal subunit.

Its function is as follows. GTPase that plays an essential role in the late steps of ribosome biogenesis. This Shewanella putrefaciens (strain CN-32 / ATCC BAA-453) protein is GTPase Der.